We begin with the raw amino-acid sequence, 435 residues long: MAVAELSPCYQTQIVKPPHLSWLSNNHKLNLLGLPKASRITEICCSLAPNQVQTPVAVPTGAQSIKPECYGVFCWTYDLKKEEETRSWKKMITIAISGAAGTISNHLLFKLASGVVFGPDQPIALKLLGSEKSFHALEGVAMELEDSLYPLLREVSIGIDPYEVFEDAEWALLIGAKPRGPGMERADLLDINGKIYAEQGKALNAVASPNVKVIVVGNPCNTNALICLKNPPNIPAKNFHSLTRLDENRAKCQLALKAGVFYDKVSNVTIWGNHSTTQVPDFVNAQIGGVPVKEVIKAQKWLEEEFTEKVRKRGGVLIQKWGRSSAASTAVSIVDAINPLITPTPPGDWFPSGVYTNGNPYGIAEDLIYSMPCRSKGDGDYELVKDVIFDDYLRKRIKTSEEELLAEKRCTAHLTGEGIAVCDLPAGDTMLPGEM.

The transit peptide at 1-45 (MAVAELSPCYQTQIVKPPHLSWLSNNHKLNLLGLPKASRITEICC) directs the protein to the chloroplast. Residues Cys69 and Cys74 are joined by a disulfide bond. 98–104 (GAAGTIS) lines the NADP(+) pocket. Substrate-binding residues include Arg179 and Arg185. Asn192 lines the NADP(+) pocket. Gln199 is a binding site for NAD(+). 216–218 (VGN) lines the NADP(+) pocket. Substrate is bound by residues Asn218 and Arg249. His274 (proton acceptor) is an active-site residue. Cys410 and Cys422 are joined by a disulfide.

The protein belongs to the LDH/MDH superfamily. MDH type 2 family. Homodimer.

It is found in the plastid. The protein localises to the chloroplast. It carries out the reaction (S)-malate + NADP(+) = oxaloacetate + NADPH + H(+). Chloroplast NADP-MDH is activated upon illumination. In order to be enzymatically active, disulfides bridges on the protein must be reduced by thioredoxin which receives electrons from ferredoxin and the electron transport system of photosynthesis. In terms of biological role, the chloroplastic, NADP-dependent form is essential for the photosynthesis C4 cycle, which allows plants to circumvent the problem of photorespiration. In C4 plants, NADP-MDH activity acts to convert oxaloacetate to malate in chloroplasts of mesophyll cells for transport to the bundle sheath cells. The protein is Malate dehydrogenase [NADP], chloroplastic (MDH) of Spinacia oleracea (Spinach).